The sequence spans 128 residues: MPTINQLIRKGREPKERKSKSPALMGNPQKRGVCIRVTTMTPKKPNSALRKVARVRLTNGVEVWAYIPGIGHNLQEHSVVLVRGGRVKDLPGVRYHIIRGALDAAGVEGRKQGRSKYGTKRPKEGGKK.

The interval 1-30 (MPTINQLIRKGREPKERKSKSPALMGNPQK) is disordered. Aspartate 89 is modified (3-methylthioaspartic acid). The segment at 106-128 (GVEGRKQGRSKYGTKRPKEGGKK) is disordered.

Belongs to the universal ribosomal protein uS12 family. In terms of assembly, part of the 30S ribosomal subunit. Contacts proteins S8 and S17. May interact with IF1 in the 30S initiation complex.

With S4 and S5 plays an important role in translational accuracy. In terms of biological role, interacts with and stabilizes bases of the 16S rRNA that are involved in tRNA selection in the A site and with the mRNA backbone. Located at the interface of the 30S and 50S subunits, it traverses the body of the 30S subunit contacting proteins on the other side and probably holding the rRNA structure together. The combined cluster of proteins S8, S12 and S17 appears to hold together the shoulder and platform of the 30S subunit. The chain is Small ribosomal subunit protein uS12 from Dictyoglomus thermophilum (strain ATCC 35947 / DSM 3960 / H-6-12).